A 307-amino-acid polypeptide reads, in one-letter code: Thiamine-monophosphate kinase (307 aa).

Mg(2+)-binding residues include Asp26, Thr37, Thr38, and Asp39. His46 provides a ligand contact to substrate. Asp68 and Asp117 together coordinate Mg(2+). ATP is bound by residues 116–117 (GD) and Arg140. Asp207 is a binding site for Mg(2+). Thr209 contacts ATP. Asp210 is a binding site for Mg(2+). Residues Glu254 and Phe304 each coordinate substrate.

It belongs to the thiamine-monophosphate kinase family.

It catalyses the reaction thiamine phosphate + ATP = thiamine diphosphate + ADP. It functions in the pathway cofactor biosynthesis; thiamine diphosphate biosynthesis; thiamine diphosphate from thiamine phosphate: step 1/1. Catalyzes the ATP-dependent phosphorylation of thiamine-monophosphate (TMP) to form thiamine-pyrophosphate (TPP), the active form of vitamin B1. In Leptospira interrogans serogroup Icterohaemorrhagiae serovar Lai (strain 56601), this protein is Thiamine-monophosphate kinase.